A 522-amino-acid polypeptide reads, in one-letter code: Zinc finger protein 892 (522 aa).

Disordered stretches follow at residues 1–22 (MEPE…GNPK) and 96–124 (AASQ…ESAP). The span at 100 to 116 (KHWETIPESKELTPEKD) shows a compositional bias: basic and acidic residues. 10 C2H2-type zinc fingers span residues 221 to 243 (WKCN…QRIH), 249 to 271 (YECN…QRIH), 277 to 299 (YECH…HIIH), 305 to 327 (YECN…QRIH), 333 to 355 (YECN…QVIH), 361 to 383 (YKCN…QRTH), 389 to 411 (YECN…QRTH), 417 to 439 (YKCN…QRTH), 445 to 467 (YKCK…QKTH), and 473 to 495 (YKCK…QKTH).

The protein belongs to the krueppel C2H2-type zinc-finger protein family.

It localises to the nucleus. Its function is as follows. May be involved in transcriptional regulation. This Homo sapiens (Human) protein is Zinc finger protein 892.